Here is a 390-residue protein sequence, read N- to C-terminus: Ribosomal RNA large subunit methyltransferase G (390 aa).

It belongs to the methyltransferase superfamily. RlmG family.

It is found in the cytoplasm. The enzyme catalyses guanosine(1835) in 23S rRNA + S-adenosyl-L-methionine = N(2)-methylguanosine(1835) in 23S rRNA + S-adenosyl-L-homocysteine + H(+). Its function is as follows. Specifically methylates the guanine in position 1835 (m2G1835) of 23S rRNA. In Alcanivorax borkumensis (strain ATCC 700651 / DSM 11573 / NCIMB 13689 / SK2), this protein is Ribosomal RNA large subunit methyltransferase G.